The sequence spans 469 residues: Trigger factor (469 aa).

The region spanning 166-245 (GDFLTIDITA…VKSVKERELP (80 aa)) is the PPIase FKBP-type domain. The segment at 430-469 (GGEEEAAEAEAAPAVDSDAVEGEAATEEAAPSDDPAAVKF) is disordered.

This sequence belongs to the FKBP-type PPIase family. Tig subfamily.

The protein localises to the cytoplasm. The catalysed reaction is [protein]-peptidylproline (omega=180) = [protein]-peptidylproline (omega=0). In terms of biological role, involved in protein export. Acts as a chaperone by maintaining the newly synthesized protein in an open conformation. Functions as a peptidyl-prolyl cis-trans isomerase. The sequence is that of Trigger factor from Arthrobacter sp. (strain FB24).